A 207-amino-acid chain; its full sequence is Protein-L-isoaspartate O-methyltransferase (207 aa).

Ser56 is a catalytic residue.

The protein belongs to the methyltransferase superfamily. L-isoaspartyl/D-aspartyl protein methyltransferase family.

Its subcellular location is the cytoplasm. It carries out the reaction [protein]-L-isoaspartate + S-adenosyl-L-methionine = [protein]-L-isoaspartate alpha-methyl ester + S-adenosyl-L-homocysteine. Catalyzes the methyl esterification of L-isoaspartyl residues in peptides and proteins that result from spontaneous decomposition of normal L-aspartyl and L-asparaginyl residues. It plays a role in the repair and/or degradation of damaged proteins. In Pyrobaculum neutrophilum (strain DSM 2338 / JCM 9278 / NBRC 100436 / V24Sta) (Thermoproteus neutrophilus), this protein is Protein-L-isoaspartate O-methyltransferase.